The primary structure comprises 307 residues: Deaminated glutathione amidase (307 aa).

Residues 6–285 enclose the CN hydrolase domain; that stretch reads KRVAVAQLCS…PQLILADLDR (280 aa). Glu45 functions as the Proton acceptor in the catalytic mechanism. The Proton donor role is filled by Lys127. The active-site Nucleophile is the Cys169. Substrate is bound by residues Arg173 and Thr199.

It belongs to the carbon-nitrogen hydrolase superfamily. NIT1/NIT2 family. Homodimer.

It is found in the cytoplasm. Its subcellular location is the mitochondrion. It catalyses the reaction N-(4-oxoglutaryl)-L-cysteinylglycine + H2O = L-cysteinylglycine + 2-oxoglutarate. The enzyme catalyses N-(4-carboxy-4-oxobutanoyl)-L-ethylglycylglycine + H2O = N-(2-aminobutanoyl)glycine + 2-oxoglutarate. Functionally, catalyzes the hydrolysis of the amide bond in N-(4-oxoglutarate)-L-cysteinylglycine (deaminated glutathione), a metabolite repair reaction to dispose of the harmful deaminated glutathione. Possesses amidase activity toward deaminated ophthalmate in vitro. This chain is Deaminated glutathione amidase (NIT2), found in Saccharomyces cerevisiae (strain ATCC 204508 / S288c) (Baker's yeast).